Consider the following 349-residue polypeptide: Ion-translocating oxidoreductase complex subunit D (349 aa).

3 helical membrane-spanning segments follow: residues Val-20 to Gly-42, Ser-77 to Val-99, and Ala-124 to Ala-144. The residue at position 185 (Thr-185) is an FMN phosphoryl threonine. 5 consecutive transmembrane segments (helical) span residues Ser-212 to Leu-232, Trp-239 to Leu-259, Ala-265 to Thr-285, Ala-291 to Ile-311, and Gly-315 to Ile-335.

Belongs to the NqrB/RnfD family. In terms of assembly, the complex is composed of six subunits: RnfA, RnfB, RnfC, RnfD, RnfE and RnfG. FMN is required as a cofactor.

It is found in the cell inner membrane. In terms of biological role, part of a membrane-bound complex that couples electron transfer with translocation of ions across the membrane. The polypeptide is Ion-translocating oxidoreductase complex subunit D (Shewanella baltica (strain OS185)).